We begin with the raw amino-acid sequence, 524 residues long: Acetyl-CoA hydrolase (524 aa).

279–283 (GIGNI) is a binding site for CoA. Glutamate 304 functions as the 5-glutamyl coenzyme A thioester intermediate in the catalytic mechanism. CoA is bound at residue glycine 398.

It belongs to the acetyl-CoA hydrolase/transferase family.

It is found in the cytoplasm. It carries out the reaction acetyl-CoA + H2O = acetate + CoA + H(+). Functionally, presumably involved in regulating the intracellular acetyl-CoA pool for fatty acid and cholesterol synthesis and fatty acid oxidation. The chain is Acetyl-CoA hydrolase (ACH1) from Yarrowia lipolytica (strain CLIB 122 / E 150) (Yeast).